The following is a 353-amino-acid chain: UPF0283 membrane protein YcjF (353 aa).

Basic and acidic residues predominate over residues 1–19 (MSEPLKPRIDFAEPLKEEP). A disordered region spans residues 1 to 35 (MSEPLKPRIDFAEPLKEEPTSAFKAQQTFSEAESR). 3 helical membrane-spanning segments follow: residues 70–90 (MVMG…IQWT), 100–120 (VALG…GSVV), and 213–233 (ESTL…FIAW).

Belongs to the UPF0283 family.

Its subcellular location is the cell inner membrane. This chain is UPF0283 membrane protein YcjF, found in Salmonella agona (strain SL483).